A 185-amino-acid chain; its full sequence is Elongation factor P (185 aa).

This sequence belongs to the elongation factor P family.

The protein localises to the cytoplasm. It functions in the pathway protein biosynthesis; polypeptide chain elongation. Functionally, involved in peptide bond synthesis. Stimulates efficient translation and peptide-bond synthesis on native or reconstituted 70S ribosomes in vitro. Probably functions indirectly by altering the affinity of the ribosome for aminoacyl-tRNA, thus increasing their reactivity as acceptors for peptidyl transferase. The polypeptide is Elongation factor P (Bacillus velezensis (strain DSM 23117 / BGSC 10A6 / LMG 26770 / FZB42) (Bacillus amyloliquefaciens subsp. plantarum)).